We begin with the raw amino-acid sequence, 68 residues long: Dermaseptin-H5 (68 aa).

The signal sequence occupies residues 1–17 (KSLFLVLFLGMVSLSIC). The propeptide occupies 18 to 38 (EEEKRENEDEEKQEDDEQSEM). The tract at residues 19-40 (EEKRENEDEEKQEDDEQSEMKR) is disordered. The span at 25-35 (EDEEKQEDDEQ) shows a compositional bias: acidic residues. At L65 the chain carries Leucine amide. Residues 67–68 (EQ) constitute a propeptide that is removed on maturation.

In terms of tissue distribution, expressed by the skin glands.

It is found in the secreted. Has antibacterial activity against the Gram-negative bacteria E.coli ATCC 11775 (MIC=0.5 uM), and the Gram-positive bacteria S.aureus ATCC 12600 (MIC=0.5 uM) and M.luteus ATCC 49732 (MIC=2.0 uM). Does not inhibit the growth of the fungus C.albicans. Probably acts by disturbing membrane functions with its amphipathic structure. The chain is Dermaseptin-H5 from Pithecopus azureus (Orange-legged monkey tree frog).